A 244-amino-acid polypeptide reads, in one-letter code: Lytic polysaccharide monooxygenase-like protein ANIA_04702 (244 aa).

Positions 1–23 are cleaved as a signal peptide; it reads MLMSTSPSPWLAAAMLCIGLANA. A Cu(2+)-binding site is contributed by His-24. Residue His-24 is modified to Methylhistidine. Asn-57, Asn-80, Asn-118, Asn-159, Asn-192, and Asn-198 each carry an N-linked (GlcNAc...) asparagine glycan. 2 disulfides stabilise this stretch: Cys-72/Cys-177 and Cys-142/Cys-196. Residue Asn-215 is the site of GPI-anchor amidated asparagine attachment. Positions 216–244 are cleaved as a propeptide — removed in mature form; it reads AGLEAVTVPSFLTAVVPTFLGIAYGLLMA.

This sequence belongs to the X325 family. The cofactor is Cu(2+). Post-translationally, the catalytically essential N-terminal histidine His-24 is post-translationally modified by methylation to prevent protonation of the histidine side chain, and protect the critical active site of the enzyme from oxidative damage.

It localises to the cell membrane. Its function is as follows. Lytic polysaccharide monooxygenase-like protein that has diverged to biological functions other than polysaccharide degradation since it does not perform oxidative cleavage of polysaccharides. Acts as a cell surface-bound protein that functions in the copper-accumulation pathway. May also act as the major cell wall sensor that regulates MAP kinase-dependent hyphal anastomosis, the fusion of hyphal cells. In Emericella nidulans (strain FGSC A4 / ATCC 38163 / CBS 112.46 / NRRL 194 / M139) (Aspergillus nidulans), this protein is Lytic polysaccharide monooxygenase-like protein ANIA_04702.